A 209-amino-acid polypeptide reads, in one-letter code: dITP/XTP pyrophosphatase (209 aa).

22–27 contacts substrate; the sequence is SHNQGK. The active-site Proton acceptor is the Asp-83. A Mg(2+)-binding site is contributed by Asp-83. Substrate is bound by residues Ser-84, 167 to 170, Lys-190, and 195 to 196; these read FGYD and HR.

Belongs to the HAM1 NTPase family. In terms of assembly, homodimer. It depends on Mg(2+) as a cofactor.

It carries out the reaction XTP + H2O = XMP + diphosphate + H(+). It catalyses the reaction dITP + H2O = dIMP + diphosphate + H(+). The catalysed reaction is ITP + H2O = IMP + diphosphate + H(+). Its function is as follows. Pyrophosphatase that catalyzes the hydrolysis of nucleoside triphosphates to their monophosphate derivatives, with a high preference for the non-canonical purine nucleotides XTP (xanthosine triphosphate), dITP (deoxyinosine triphosphate) and ITP. Seems to function as a house-cleaning enzyme that removes non-canonical purine nucleotides from the nucleotide pool, thus preventing their incorporation into DNA/RNA and avoiding chromosomal lesions. This is dITP/XTP pyrophosphatase from Zymomonas mobilis subsp. mobilis (strain ATCC 31821 / ZM4 / CP4).